A 52-amino-acid polypeptide reads, in one-letter code: UPF0391 membrane protein XOO4217 (52 aa).

2 consecutive transmembrane segments (helical) span residues 5–25 (AMIFFVIAIIAAVLGFSGIAG) and 27–47 (ATNIAWILFVVFLILAVISMF).

It belongs to the UPF0391 family.

It localises to the cell membrane. In Xanthomonas oryzae pv. oryzae (strain KACC10331 / KXO85), this protein is UPF0391 membrane protein XOO4217.